A 207-amino-acid chain; its full sequence is Mediator of RNA polymerase II transcription subunit 21 (207 aa).

Positions 37–121 (PHPDVPDAAP…PDSPRTFASR (85 aa)) are disordered. The segment covering 65-80 (PVPAQSQASPPAQNPA) has biased composition (low complexity). A compositionally biased stretch (gly residues) spans 84 to 96 (AGAGTSVGEGGQT). Low complexity predominate over residues 97-108 (PGPAAGAGADPN). Residues 146–196 (IDSSEAEQEKRIRELEGELRRVEEERELKMRELKRLRRTLENVLRAVETGL) adopt a coiled-coil conformation.

It belongs to the Mediator complex subunit 21 family. In terms of assembly, component of the Mediator complex.

It localises to the nucleus. Functionally, component of the Mediator complex, a coactivator involved in the regulated transcription of nearly all RNA polymerase II-dependent genes. Mediator functions as a bridge to convey information from gene-specific regulatory proteins to the basal RNA polymerase II transcription machinery. Mediator is recruited to promoters by direct interactions with regulatory proteins and serves as a scaffold for the assembly of a functional preinitiation complex with RNA polymerase II and the general transcription factors. This chain is Mediator of RNA polymerase II transcription subunit 21 (srb7), found in Neosartorya fischeri (strain ATCC 1020 / DSM 3700 / CBS 544.65 / FGSC A1164 / JCM 1740 / NRRL 181 / WB 181) (Aspergillus fischerianus).